Here is a 506-residue protein sequence, read N- to C-terminus: Steroid (22S)-hydroxylase (506 aa).

The helical transmembrane segment at 12–32 (LLFFLPFILLALLTFYTTTVA) threads the bilayer. Cys-449 is a binding site for heme.

It belongs to the cytochrome P450 family. Heme is required as a cofactor.

The protein resides in the membrane. It carries out the reaction a C28-steroid + reduced [NADPH--hemoprotein reductase] + O2 = a (22S)-22-hydroxy C28-steroid + oxidized [NADPH--hemoprotein reductase] + H2O + H(+). It catalyses the reaction campesterol + reduced [NADPH--hemoprotein reductase] + O2 = (22S)-22-hydroxycampesterol + oxidized [NADPH--hemoprotein reductase] + H2O + H(+). The catalysed reaction is campestanol + reduced [NADPH--hemoprotein reductase] + O2 = 6-deoxycathasterone + oxidized [NADPH--hemoprotein reductase] + H2O + H(+). The protein operates within plant hormone biosynthesis; brassinosteroid biosynthesis. In terms of biological role, catalyzes the C22-alpha-hydroxylation step in brassinosteroid biosynthesis, which is the rate-limiting step in this biosynthetic pathway. Catalyzes the conversion of campesterol (CR) to (22S)-22-hydroxycampesterol (22-OHCR, 22-hydroxyCR) and of campestanol (CN) to 6-deoxocathasterone (6-deoxoCT). This Oryza sativa subsp. indica (Rice) protein is Steroid (22S)-hydroxylase.